A 108-amino-acid polypeptide reads, in one-letter code: uncharacterized protein (108 aa).

This is an uncharacterized protein from Acanthamoeba polyphaga (Amoeba).